The sequence spans 208 residues: Ribosomal RNA small subunit methyltransferase G (208 aa).

S-adenosyl-L-methionine is bound by residues Gly78, Phe83, 101–103 (ERS), 129–130 (IE), and Arg142.

It belongs to the methyltransferase superfamily. RNA methyltransferase RsmG family.

It localises to the cytoplasm. Its function is as follows. Specifically methylates the N7 position of a guanine in 16S rRNA. The sequence is that of Ribosomal RNA small subunit methyltransferase G from Borrelia garinii subsp. bavariensis (strain ATCC BAA-2496 / DSM 23469 / PBi) (Borreliella bavariensis).